The following is a 515-amino-acid chain: Acetyltransferase sphE (515 aa).

Active-site proton acceptor residues include histidine 184 and aspartate 438.

The protein belongs to the plant acyltransferase family. Monomer.

It carries out the reaction sphingofungin B + acetyl-CoA = sphingofungin C + CoA. The protein operates within secondary metabolite biosynthesis. In terms of biological role, acetyltransferase; part of the gene cluster that mediates the biosynthesis of sphingofungins, bioactive molecules acting as sphingolipid inhibitors via inhibiting serine palmitoyl transferase (SPT). Within the pathway, sphE catalyzes the O-acetylation of the C-5 hydroxyl group of sphingofungin B to produce sphingofungin C. SphE can also convert sphingofungin B1 into sphingofungin C1 and sphingofungin B2 into sphingofungin C2. Sphingofungin biosynthesis starts with the PKS sphB that produces an C18 polyketide precursor 3-hydroxyoctadeca-4,10-dienoyl-ACP containing one delta-6 desaturation and one delta-12 desaturation. The aminoacyl transferase sphA uses the sphB product to produce 3-keto-presphingofungin by adding an aminomalonate molecule. SphF then reduces the C-3 ketone of 3-keto-presphingofungin which leads to presphingofungin. The cytochrome P450 monooxygenase sphH converts presphingofungin into sphingofungin B1 which is further converted to sphingofungin B by the dioxygenase sphC. SphC is also able to convert presphingofungin into sphingofungin B2. The acetyltransferase sphE acetylates sphingofungin B to produce sphingofungin C, but can also convert sphingofungin B1 into sphingofungin C1 and sphingofungin B2 into sphingofungin C2. Finally, sphingofungin C can be spontaneously converted into sphingofungin D. This is Acetyltransferase sphE from Aspergillus fumigatus (strain CBS 144.89 / FGSC A1163 / CEA10) (Neosartorya fumigata).